A 238-amino-acid chain; its full sequence is Dolichyldiphosphatase 1 (238 aa).

4 helical membrane passes run 33 to 53, 100 to 120, 130 to 150, and 162 to 182; these read LAYLSLSPIFVVVGFLTLIIF, PSSHSQFMWFFSVYSFLFLYL, FLDLLWRHVLSLGLLTAAFLV, and WSQVFYGGVAGSLMAVAWFII.

It belongs to the dolichyldiphosphatase family. Widely expressed with highest levels in brain, kidney, lung and intestine.

The protein resides in the endoplasmic reticulum membrane. The catalysed reaction is a di-trans,poly-cis-dolichyl diphosphate + H2O = a di-trans,poly-cis-dolichyl phosphate + phosphate + H(+). The protein operates within protein modification; protein glycosylation. Its function is as follows. Required for efficient N-glycosylation. Necessary for maintaining optimal levels of dolichol-linked oligosaccharides. Hydrolyzes dolichyl pyrophosphate at a very high rate and dolichyl monophosphate at a much lower rate. Does not act on phosphatidate. The sequence is that of Dolichyldiphosphatase 1 (Dolpp1) from Mus musculus (Mouse).